A 153-amino-acid polypeptide reads, in one-letter code: Ribonuclease H (153 aa).

Residues 1–141 (MKKIQLFTDG…CDDLARRAAE (141 aa)) enclose the RNase H type-1 domain. Positions 9, 47, 69, and 133 each coordinate Mg(2+).

Belongs to the RNase H family. As to quaternary structure, monomer. Mg(2+) serves as cofactor.

The protein localises to the cytoplasm. The enzyme catalyses Endonucleolytic cleavage to 5'-phosphomonoester.. Functionally, endonuclease that specifically degrades the RNA of RNA-DNA hybrids. The protein is Ribonuclease H of Psychromonas ingrahamii (strain DSM 17664 / CCUG 51855 / 37).